The sequence spans 281 residues: Bis(5'-nucleosyl)-tetraphosphatase, symmetrical (281 aa).

Belongs to the Ap4A hydrolase family.

The catalysed reaction is P(1),P(4)-bis(5'-adenosyl) tetraphosphate + H2O = 2 ADP + 2 H(+). Hydrolyzes diadenosine 5',5'''-P1,P4-tetraphosphate to yield ADP. In Acidovorax sp. (strain JS42), this protein is Bis(5'-nucleosyl)-tetraphosphatase, symmetrical.